The sequence spans 325 residues: Lipoyl synthase (325 aa).

The interval 1-31 (MANLIDNTARSAASDARAARHPEKQKRADTP) is disordered. The span at 17–31 (RAARHPEKQKRADTP) shows a compositional bias: basic and acidic residues. Residues Cys65, Cys70, Cys76, Cys91, Cys95, Cys98, and Ser304 each coordinate [4Fe-4S] cluster. The Radical SAM core domain occupies 77 to 293 (WEQKHATFMI…ETIARAKGFL (217 aa)).

The protein belongs to the radical SAM superfamily. Lipoyl synthase family. It depends on [4Fe-4S] cluster as a cofactor.

The protein localises to the cytoplasm. The catalysed reaction is [[Fe-S] cluster scaffold protein carrying a second [4Fe-4S](2+) cluster] + N(6)-octanoyl-L-lysyl-[protein] + 2 oxidized [2Fe-2S]-[ferredoxin] + 2 S-adenosyl-L-methionine + 4 H(+) = [[Fe-S] cluster scaffold protein] + N(6)-[(R)-dihydrolipoyl]-L-lysyl-[protein] + 4 Fe(3+) + 2 hydrogen sulfide + 2 5'-deoxyadenosine + 2 L-methionine + 2 reduced [2Fe-2S]-[ferredoxin]. It functions in the pathway protein modification; protein lipoylation via endogenous pathway; protein N(6)-(lipoyl)lysine from octanoyl-[acyl-carrier-protein]: step 2/2. Functionally, catalyzes the radical-mediated insertion of two sulfur atoms into the C-6 and C-8 positions of the octanoyl moiety bound to the lipoyl domains of lipoate-dependent enzymes, thereby converting the octanoylated domains into lipoylated derivatives. In Maricaulis maris (strain MCS10) (Caulobacter maris), this protein is Lipoyl synthase.